The primary structure comprises 497 residues: Vacuolar-processing enzyme beta-isozyme 1 (497 aa).

An N-terminal signal peptide occupies residues 1–23 (MAARCWVWGFVVALLAVAAAADG). Asn153 is a glycosylation site (N-linked (GlcNAc...) asparagine). Residue His180 is part of the active site. The Nucleophile role is filled by Cys222. Cysteines 255 and 269 form a disulfide. Asn340 is a glycosylation site (N-linked (GlcNAc...) asparagine). Cystine bridges form between Cys432-Cys462 and Cys444-Cys479.

It belongs to the peptidase C13 family. Post-translationally, auto-catalytic activation. Expressed in developing seeds.

Its subcellular location is the protein storage vacuole. The catalysed reaction is Hydrolysis of proteins and small molecule substrates at -Asn-|-Xaa- bonds.. In terms of biological role, asparagine-specific endopeptidase that may be involved in processing of proteins targeted to vacuoles. Cysteine protease required for post-translational proteolysis of seed storage proteins in the protein storage vacuole (PSV) of developing seeds, by processing of proglutelin precursor to mature glutelin subunits, thus contributing to the formation of protein crystalline structures in PSV. The polypeptide is Vacuolar-processing enzyme beta-isozyme 1 (Oryza sativa subsp. japonica (Rice)).